Reading from the N-terminus, the 258-residue chain is Imidazole glycerol phosphate synthase subunit HisF (258 aa).

Catalysis depends on residues aspartate 11 and aspartate 130.

This sequence belongs to the HisA/HisF family. Heterodimer of HisH and HisF.

It is found in the cytoplasm. The enzyme catalyses 5-[(5-phospho-1-deoxy-D-ribulos-1-ylimino)methylamino]-1-(5-phospho-beta-D-ribosyl)imidazole-4-carboxamide + L-glutamine = D-erythro-1-(imidazol-4-yl)glycerol 3-phosphate + 5-amino-1-(5-phospho-beta-D-ribosyl)imidazole-4-carboxamide + L-glutamate + H(+). It participates in amino-acid biosynthesis; L-histidine biosynthesis; L-histidine from 5-phospho-alpha-D-ribose 1-diphosphate: step 5/9. Its function is as follows. IGPS catalyzes the conversion of PRFAR and glutamine to IGP, AICAR and glutamate. The HisF subunit catalyzes the cyclization activity that produces IGP and AICAR from PRFAR using the ammonia provided by the HisH subunit. In Rhodopseudomonas palustris (strain BisB18), this protein is Imidazole glycerol phosphate synthase subunit HisF.